The chain runs to 140 residues: MKHLIPLIVMASVVLAVYADRGYGGGRRGGGYGGGGYGGGGYGGGGGGYGGGVGGGRGGGGGLGGGRGGGGGVIDGKDDVGLGGGGYGGGLGGGQGGGGGLGGGQGGGGGLGGGRGGGGYGGGGGGYGGGKYGGGKYGGK.

The N-terminal stretch at 1–19 (MKHLIPLIVMASVVLAVYA) is a signal peptide. G138 bears the Glycine amide mark.

Belongs to the glycine-rich peptide family. As to expression, expressed in hemocytes (at protein level).

The protein localises to the secreted. Functionally, antimicrobial protein with bacteriostatic activity against the Gram-negative bacterium E.coli, and very weak activity against the Gram-positive bacterium S.aureus. Lacks activity against the yeast C.albicans. In Cupiennius salei (American wandering spider), this protein is Ctenidin-1.